Reading from the N-terminus, the 93-residue chain is Cytochrome c (93 aa).

Residues 1 to 13 are compositionally biased toward low complexity; it reads AALPPGDAAAAQG. The segment at 1–21 is disordered; it reads AALPPGDAAAAQGGSNGVGPN. Residue methionine 70 participates in heme c binding.

The protein belongs to the cytochrome c family. Binds 1 heme c group covalently per subunit.

The protein localises to the mitochondrion intermembrane space. Functionally, electron carrier protein. The oxidized form of the cytochrome c heme group can accept an electron from the heme group of the cytochrome c1 subunit of cytochrome reductase. Cytochrome c then transfers this electron to the cytochrome oxidase complex, the final protein carrier in the mitochondrial electron-transport chain. The protein is Cytochrome c of Trypanosoma brucei brucei.